Here is a 129-residue protein sequence, read N- to C-terminus: Large ribosomal subunit protein bL17 (129 aa).

It belongs to the bacterial ribosomal protein bL17 family. In terms of assembly, part of the 50S ribosomal subunit. Contacts protein L32.

The polypeptide is Large ribosomal subunit protein bL17 (Hahella chejuensis (strain KCTC 2396)).